The chain runs to 162 residues: Shikimate kinase (162 aa).

11–16 (GSGKSS) serves as a coordination point for ATP. S15 is a binding site for Mg(2+). Residues D33, R57, and G80 each contribute to the substrate site. Residues 109-123 (NQKEREKRPLLNNLT) form an LID domain region. Residue R116 coordinates ATP. R132 contributes to the substrate binding site.

It belongs to the shikimate kinase family. In terms of assembly, monomer. The cofactor is Mg(2+).

It is found in the cytoplasm. It catalyses the reaction shikimate + ATP = 3-phosphoshikimate + ADP + H(+). Its pathway is metabolic intermediate biosynthesis; chorismate biosynthesis; chorismate from D-erythrose 4-phosphate and phosphoenolpyruvate: step 5/7. In terms of biological role, catalyzes the specific phosphorylation of the 3-hydroxyl group of shikimic acid using ATP as a cosubstrate. The chain is Shikimate kinase (aroK) from Helicobacter pylori (strain ATCC 700392 / 26695) (Campylobacter pylori).